Reading from the N-terminus, the 142-residue chain is Centromere protein S (142 aa).

The disordered stretch occupies residues 107 to 142 (LKGKAKKKRKPEDESRSSRESMAEELDGAEELQSES). The span at 116-128 (KPEDESRSSRESM) shows a compositional bias: basic and acidic residues. Over residues 129 to 142 (AEELDGAEELQSES) the composition is skewed to acidic residues.

The protein belongs to the TAF9 family. CENP-S/MHF1 subfamily. Heterodimer with CENPX, sometimes called MHF; this interaction stabilizes both partners. MHF heterodimers can assemble to form tetrameric structures. MHF also coassemble with CENPT-CENPW heterodimers at centromeres to form the tetrameric CENP-T-W-S-X complex. Forms a discrete complex with FANCM and CENPX, called FANCM-MHF; this interaction, probably mediated by direct binding between CENPS and FANCM, leads to synergistic activation of double-stranded DNA binding and strongly stimulates FANCM-mediated DNA remodeling. Recruited by FANCM to the Fanconi anemia (FA) core complex, which consists of CENPS, CENPX, FANCA, FANCB, FANCC, FANCE, FANCF, FANCG, FANCL, FANCM, FAAP24 and FAAP100. The FA core complex associates with Bloom syndrome (BLM) complex, which consists of at least BLM, DNA topoisomerase 3-alpha (TOP3A), RMI1/BLAP75, RPA1/RPA70 and RPA2/RPA32. The super complex between FA and BLM is called BRAFT. Component of the CENPA-CAD complex, composed of CENPI, CENPK, CENPL, CENPO, CENPP, CENPQ, CENPR and CENPS. The CENPA-CAD complex is probably recruited on centromeres by the CENPA-NAC complex, at least composed of CENPA, CENPC, CENPH, CENPM, CENPN, CENPT and CENPU.

Its subcellular location is the nucleus. It is found in the chromosome. The protein resides in the centromere. It localises to the kinetochore. Its function is as follows. DNA-binding component of the Fanconi anemia (FA) core complex. Required for the normal activation of the FA pathway, leading to monoubiquitination of the FANCI-FANCD2 complex in response to DNA damage, cellular resistance to DNA cross-linking drugs, and prevention of chromosomal breakage. In complex with CENPX (MHF heterodimer), crucial cofactor for FANCM in both binding and ATP-dependent remodeling of DNA. Stabilizes FANCM. In complex with CENPX and FANCM (but not other FANC proteins), rapidly recruited to blocked forks and promotes gene conversion at blocked replication forks. In complex with CENPT, CENPW and CENPX (CENP-T-W-S-X heterotetramer), involved in the formation of a functional kinetochore outer plate, which is essential for kinetochore-microtubule attachment and faithful mitotic progression. As a component of MHF and CENP-T-W-S-X complexes, binds DNA and bends it to form a nucleosome-like structure. DNA-binding function is fulfilled in the presence of CENPX, with the following preference for DNA substates: Holliday junction &gt; double-stranded &gt; splay arm &gt; single-stranded. Does not bind DNA on its own. The chain is Centromere protein S (Cenps) from Mus musculus (Mouse).